Consider the following 148-residue polypeptide: Large ribosomal subunit protein bL9 (148 aa).

This sequence belongs to the bacterial ribosomal protein bL9 family.

Its function is as follows. Binds to the 23S rRNA. The sequence is that of Large ribosomal subunit protein bL9 from Listeria innocua serovar 6a (strain ATCC BAA-680 / CLIP 11262).